Here is a 184-residue protein sequence, read N- to C-terminus: Peptide deformylase 2 (184 aa).

Residues Cys110 and His153 each coordinate Fe cation. The active site involves Glu154. Residue His157 participates in Fe cation binding.

This sequence belongs to the polypeptide deformylase family. The cofactor is Fe(2+).

The catalysed reaction is N-terminal N-formyl-L-methionyl-[peptide] + H2O = N-terminal L-methionyl-[peptide] + formate. Functionally, removes the formyl group from the N-terminal Met of newly synthesized proteins. Requires at least a dipeptide for an efficient rate of reaction. N-terminal L-methionine is a prerequisite for activity but the enzyme has broad specificity at other positions. The chain is Peptide deformylase 2 from Bacillus cereus (strain ATCC 14579 / DSM 31 / CCUG 7414 / JCM 2152 / NBRC 15305 / NCIMB 9373 / NCTC 2599 / NRRL B-3711).